A 151-amino-acid chain; its full sequence is uncharacterized protein (151 aa).

The next 4 membrane-spanning stretches (helical) occupy residues 8-28 (GIGS…EFFE), 60-80 (WHVA…GVLT), 82-102 (FSAL…HADS), and 113-133 (LPLI…GKLS).

Belongs to the DoxX family.

The protein localises to the cell membrane. This is an uncharacterized protein from Haemophilus influenzae (strain ATCC 51907 / DSM 11121 / KW20 / Rd).